A 504-amino-acid chain; its full sequence is Maturase K (504 aa).

This sequence belongs to the intron maturase 2 family. MatK subfamily.

Its subcellular location is the plastid. The protein localises to the chloroplast. Functionally, usually encoded in the trnK tRNA gene intron. Probably assists in splicing its own and other chloroplast group II introns. In Quercus gemelliflora (Pasang hiris), this protein is Maturase K.